We begin with the raw amino-acid sequence, 181 residues long: MFGLKQFYQDEVRAKLAQELDIKNPMLLPKLEKIVISVGAGAHAKDMKIMQNIAQTISLIAGQKAVITKAKKSVAGFKIREGMAVGAKVTLRNKRMYNFLEKLIVISLPRVKDFRGISRNGFDGRGNYTFGINEQLIFPEVVYDDIMVSHGMNITMVTSTDNDKEAFKLLELLGLPFAKVR.

This sequence belongs to the universal ribosomal protein uL5 family. In terms of assembly, part of the 50S ribosomal subunit; part of the 5S rRNA/L5/L18/L25 subcomplex. Contacts the 5S rRNA and the P site tRNA. Forms a bridge to the 30S subunit in the 70S ribosome.

Functionally, this is one of the proteins that bind and probably mediate the attachment of the 5S RNA into the large ribosomal subunit, where it forms part of the central protuberance. In the 70S ribosome it contacts protein S13 of the 30S subunit (bridge B1b), connecting the 2 subunits; this bridge is implicated in subunit movement. Contacts the P site tRNA; the 5S rRNA and some of its associated proteins might help stabilize positioning of ribosome-bound tRNAs. This Helicobacter pylori (strain G27) protein is Large ribosomal subunit protein uL5.